A 293-amino-acid polypeptide reads, in one-letter code: Ribokinase (293 aa).

Substrate-binding positions include 11 to 13 (SMD), 39 to 43 (GKGAN), and glutamate 139. ATP contacts are provided by residues asparagine 183 and 210–215 (TEGKQG). K(+)-binding residues include aspartate 236 and threonine 238. Residues 241 to 242 (GD) and asparagine 266 contribute to the ATP site. Aspartate 242 provides a ligand contact to substrate. Aspartate 242 acts as the Proton acceptor in catalysis. Residues serine 272, serine 275, and glycine 277 each coordinate K(+).

This sequence belongs to the carbohydrate kinase PfkB family. Ribokinase subfamily. As to quaternary structure, homodimer. It depends on Mg(2+) as a cofactor.

It localises to the cytoplasm. The enzyme catalyses D-ribose + ATP = D-ribose 5-phosphate + ADP + H(+). It participates in carbohydrate metabolism; D-ribose degradation; D-ribose 5-phosphate from beta-D-ribopyranose: step 2/2. With respect to regulation, activated by a monovalent cation that binds near, but not in, the active site. The most likely occupant of the site in vivo is potassium. Ion binding induces a conformational change that may alter substrate affinity. Its function is as follows. Catalyzes the phosphorylation of ribose at O-5 in a reaction requiring ATP and magnesium. The resulting D-ribose-5-phosphate can then be used either for sythesis of nucleotides, histidine, and tryptophan, or as a component of the pentose phosphate pathway. The protein is Ribokinase of Bacillus subtilis (strain 168).